The primary structure comprises 222 residues: Thiamine-phosphate synthase (222 aa).

Residues 40-44 (QLRDK) and asparagine 81 contribute to the 4-amino-2-methyl-5-(diphosphooxymethyl)pyrimidine site. Mg(2+) is bound by residues aspartate 82 and aspartate 101. Serine 120 lines the 4-amino-2-methyl-5-(diphosphooxymethyl)pyrimidine pocket. A 2-[(2R,5Z)-2-carboxy-4-methylthiazol-5(2H)-ylidene]ethyl phosphate-binding site is contributed by 146 to 148 (TPT). Lysine 149 lines the 4-amino-2-methyl-5-(diphosphooxymethyl)pyrimidine pocket. Glycine 178 serves as a coordination point for 2-[(2R,5Z)-2-carboxy-4-methylthiazol-5(2H)-ylidene]ethyl phosphate.

It belongs to the thiamine-phosphate synthase family. Mg(2+) is required as a cofactor.

The enzyme catalyses 2-[(2R,5Z)-2-carboxy-4-methylthiazol-5(2H)-ylidene]ethyl phosphate + 4-amino-2-methyl-5-(diphosphooxymethyl)pyrimidine + 2 H(+) = thiamine phosphate + CO2 + diphosphate. It catalyses the reaction 2-(2-carboxy-4-methylthiazol-5-yl)ethyl phosphate + 4-amino-2-methyl-5-(diphosphooxymethyl)pyrimidine + 2 H(+) = thiamine phosphate + CO2 + diphosphate. It carries out the reaction 4-methyl-5-(2-phosphooxyethyl)-thiazole + 4-amino-2-methyl-5-(diphosphooxymethyl)pyrimidine + H(+) = thiamine phosphate + diphosphate. It functions in the pathway cofactor biosynthesis; thiamine diphosphate biosynthesis; thiamine phosphate from 4-amino-2-methyl-5-diphosphomethylpyrimidine and 4-methyl-5-(2-phosphoethyl)-thiazole: step 1/1. Condenses 4-methyl-5-(beta-hydroxyethyl)thiazole monophosphate (THZ-P) and 2-methyl-4-amino-5-hydroxymethyl pyrimidine pyrophosphate (HMP-PP) to form thiamine monophosphate (TMP). This Mycobacterium tuberculosis (strain ATCC 25177 / H37Ra) protein is Thiamine-phosphate synthase.